The primary structure comprises 80 residues: Cell division protein ZapB (80 aa).

A coiled-coil region spans residues 3 to 80 (FEVLEQLESK…ALLGKMDEVE (78 aa)).

Belongs to the ZapB family. Homodimer. The ends of the coiled-coil dimer bind to each other, forming polymers. Interacts with FtsZ.

Its subcellular location is the cytoplasm. Its function is as follows. Non-essential, abundant cell division factor that is required for proper Z-ring formation. It is recruited early to the divisome by direct interaction with FtsZ, stimulating Z-ring assembly and thereby promoting cell division earlier in the cell cycle. Its recruitment to the Z-ring requires functional FtsA or ZipA. This Vibrio parahaemolyticus serotype O3:K6 (strain RIMD 2210633) protein is Cell division protein ZapB.